The chain runs to 454 residues: UPF0210 protein BAD_1323 (454 aa).

This sequence belongs to the UPF0210 family. In terms of assembly, homodimer.

This chain is UPF0210 protein BAD_1323, found in Bifidobacterium adolescentis (strain ATCC 15703 / DSM 20083 / NCTC 11814 / E194a).